We begin with the raw amino-acid sequence, 164 residues long: MLSYNIDIGGITALSIMTELATSHKTKIVIANYLEIVPTIANPNSLFMYMYDDIKQCIYINFSIPETLKIFSEAKNNARKALQNSDGLIIPGNVNMVDARLFGEVISPNDVKLHNLERNIAEMALIHVATQRGIPILGICGGIKFLILILVARSVITVKIIIYM.

The region spanning 39-164 (TIANPNSLFM…VITVKIIIYM (126 aa)) is the Glutamine amidotransferase type-1 domain.

The chain is Putative glutamine amidotransferase-like protein RP713 from Rickettsia prowazekii (strain Madrid E).